We begin with the raw amino-acid sequence, 1381 residues long: Serine-aspartate repeat-containing protein D (1381 aa).

Positions M1–I35 are cleaved as a signal peptide. Positions F23–S34 match the YSIRK-G/S signaling motif motif. The interval L36–E568 is ligand binding A region. Positions E54–S185 are disordered. Composition is skewed to polar residues over residues E62–Q71 and E94–N108. Residues K130–N145 are compositionally biased toward basic and acidic residues. Composition is skewed to polar residues over residues T146 to A155 and N163 to N173. Basic and acidic residues predominate over residues E174–T183. CNA-B domains lie at V569–P680, K681–P791, K792–P901, T902–P1012, and K1013–T1123. Disordered regions lie at residues E857–T883, Y972–T992, and E1078–A1357. Composition is skewed to polar residues over residues S860–S869 and Y972–N981. 4 stretches are compositionally biased toward acidic residues: residues T1091–E1101, Y1118–S1134, S1142–S1164, and S1172–S1320. The short motif at L1344 to G1348 is the LPXTG sorting signal element. T1347 is modified (pentaglycyl murein peptidoglycan amidated threonine). The propeptide at G1348–K1381 is removed by sortase.

Belongs to the serine-aspartate repeat-containing protein (SDr) family. In terms of assembly, interacts with host DSG1; this interaction increases S.aureus adherence to keratinocytes.

It localises to the secreted. The protein resides in the cell wall. Its function is as follows. Cell surface-associated calcium-binding protein which plays an important role in adhesion and pathogenesis. Mediates interactions with components of the extracellular matrix such as host DSG1 to promote bacterial adhesion to host cells. Contributes to the resistance to killing by innate immune components such as neutrophils present in blood and thus attenuates bacterial clearance. This Staphylococcus aureus (strain USA300) protein is Serine-aspartate repeat-containing protein D (sdrD).